The chain runs to 482 residues: Malvidin galactosylase UGT88C3 (482 aa).

Catalysis depends on His-16, which acts as the Proton acceptor. Catalysis depends on Asp-117, which acts as the Charge relay. Positions 279, 345, 349, 366, 370, 371, and 374 each coordinate UDP.

This sequence belongs to the UDP-glycosyltransferase family. In terms of tissue distribution, highly expressed in leaves, sheaths, pistils and embryos, observed in stems, stem nodes and panicles, and present at low levels in roots.

The protein resides in the endoplasmic reticulum. Its subcellular location is the nucleus. It catalyses the reaction malvidin + UDP-alpha-D-galactose = malvidin 3-O-beta-D-galactoside + UDP + H(+). The protein operates within pigment biosynthesis; anthocyanin biosynthesis. Functionally, UDP-glycosyltransferase which uses UDP-galactose and malvidin as substrates to catalyze the biosynthesis of malvidin 3-O-galactoside, an anthocyanin conferring purple pigmentation. The protein is Malvidin galactosylase UGT88C3 of Oryza sativa subsp. japonica (Rice).